Consider the following 298-residue polypeptide: Thymidylate synthase (298 aa).

DUMP is bound by residues Arg25 and 159 to 160 (RR). Cys179 functions as the Nucleophile in the catalytic mechanism. Residues 200–203 (RSVD), Asn211, and 241–243 (HLY) contribute to the dUMP site. Residue Asp203 participates in (6R)-5,10-methylene-5,6,7,8-tetrahydrofolate binding. Residue Ala297 participates in (6R)-5,10-methylene-5,6,7,8-tetrahydrofolate binding.

It belongs to the thymidylate synthase family. Bacterial-type ThyA subfamily. As to quaternary structure, homodimer.

The protein localises to the cytoplasm. The catalysed reaction is dUMP + (6R)-5,10-methylene-5,6,7,8-tetrahydrofolate = 7,8-dihydrofolate + dTMP. The protein operates within pyrimidine metabolism; dTTP biosynthesis. Functionally, catalyzes the reductive methylation of 2'-deoxyuridine-5'-monophosphate (dUMP) to 2'-deoxythymidine-5'-monophosphate (dTMP) while utilizing 5,10-methylenetetrahydrofolate (mTHF) as the methyl donor and reductant in the reaction, yielding dihydrofolate (DHF) as a by-product. This enzymatic reaction provides an intracellular de novo source of dTMP, an essential precursor for DNA biosynthesis. The chain is Thymidylate synthase from Cereibacter sphaeroides (strain ATCC 17029 / ATH 2.4.9) (Rhodobacter sphaeroides).